The sequence spans 392 residues: Methylthioribose-1-phosphate isomerase (392 aa).

Asp253 acts as the Proton donor in catalysis.

The protein belongs to the eIF-2B alpha/beta/delta subunits family. MtnA subfamily.

It is found in the cytoplasm. The protein resides in the nucleus. The enzyme catalyses 5-(methylsulfanyl)-alpha-D-ribose 1-phosphate = 5-(methylsulfanyl)-D-ribulose 1-phosphate. It participates in amino-acid biosynthesis; L-methionine biosynthesis via salvage pathway; L-methionine from S-methyl-5-thio-alpha-D-ribose 1-phosphate: step 1/6. Its function is as follows. Catalyzes the interconversion of methylthioribose-1-phosphate (MTR-1-P) into methylthioribulose-1-phosphate (MTRu-1-P). The chain is Methylthioribose-1-phosphate isomerase (mri1) from Pyrenophora tritici-repentis (strain Pt-1C-BFP) (Wheat tan spot fungus).